We begin with the raw amino-acid sequence, 993 residues long: Isoleucine--tRNA ligase (993 aa).

A 'HIGH' region motif is present at residues 64–74 (PYANGNIHIGH). L-isoleucyl-5'-AMP is bound at residue E621. The 'KMSKS' region signature appears at 662-666 (KMSKS). Residue K665 participates in ATP binding.

Belongs to the class-I aminoacyl-tRNA synthetase family. IleS type 1 subfamily. In terms of assembly, monomer.

It is found in the cytoplasm. It catalyses the reaction tRNA(Ile) + L-isoleucine + ATP = L-isoleucyl-tRNA(Ile) + AMP + diphosphate. Catalyzes the attachment of isoleucine to tRNA(Ile). As IleRS can inadvertently accommodate and process structurally similar amino acids such as valine, to avoid such errors it has two additional distinct tRNA(Ile)-dependent editing activities. One activity is designated as 'pretransfer' editing and involves the hydrolysis of activated Val-AMP. The other activity is designated 'posttransfer' editing and involves deacylation of mischarged Val-tRNA(Ile). This is Isoleucine--tRNA ligase from Mesorhizobium japonicum (strain LMG 29417 / CECT 9101 / MAFF 303099) (Mesorhizobium loti (strain MAFF 303099)).